We begin with the raw amino-acid sequence, 195 residues long: A-type ATP synthase subunit E (195 aa).

The protein belongs to the V-ATPase E subunit family. In terms of assembly, has multiple subunits with at least A(3), B(3), C, D, E, F, H, I and proteolipid K(x).

It is found in the cell membrane. Component of the A-type ATP synthase that produces ATP from ADP in the presence of a proton gradient across the membrane. The polypeptide is A-type ATP synthase subunit E (Halobacterium salinarum (strain ATCC 29341 / DSM 671 / R1)).